A 254-amino-acid chain; its full sequence is uncharacterized protein (254 aa).

Residues 163-182 (PNKHTQHKRSTRRTSPKDYN) are disordered. The segment covering 166-176 (HTQHKRSTRRT) has biased composition (basic residues). Residues 207–227 (AHSAWILIIIIIIIVVILFFF) form a helical membrane-spanning segment.

The protein belongs to the RL11 family.

The protein resides in the host membrane. This is an uncharacterized protein from Human cytomegalovirus (strain Merlin) (HHV-5).